A 335-amino-acid chain; its full sequence is UPF0353 protein MT1528 (335 aa).

Transmembrane regions (helical) follow at residues 18–38 (WFFL…LMQL) and 67–87 (VPAI…AGPT). A VWFA domain is found at 98–294 (VVMLVIDVSQ…AELRAVYSSL (197 aa)). Residues 309–329 (VGWLRLGALALALAALAALLI) form a helical membrane-spanning segment.

The protein belongs to the UPF0353 family.

It localises to the cell membrane. The protein is UPF0353 protein MT1528 of Mycobacterium tuberculosis (strain CDC 1551 / Oshkosh).